The chain runs to 1036 residues: Vacuolar basic amino acid transporter VSB1 (1036 aa).

Residues 1 to 213 (MGRTIRRRRS…SKFAHYLPAA (213 aa)) lie on the Vacuolar side of the membrane. A phosphoserine mark is found at Ser42 and Ser127. Phosphothreonine is present on Thr130. Residues Ser140, Ser144, Ser149, Ser152, and Ser153 each carry the phosphoserine modification. Residues 214-234 (VLGLLLNILDALSYGMIIFPI) traverse the membrane as a helical segment. The Cytoplasmic segment spans residues 235–236 (TE). Residues 237 to 257 (PVFSHLGPTGISMFYISTIIS) form a helical membrane-spanning segment. Residues 258–269 (QAVYSGGWSSFP) lie on the Vacuolar side of the membrane. A helical membrane pass occupies residues 270–290 (SGIGSEMIEITPFYHTMALAI). Topologically, residues 291–300 (KEALAGNDDE) are cytoplasmic. A helical transmembrane segment spans residues 301–321 (IITTTIFCYVISSMLTGVVFY). Topologically, residues 322–338 (ALGKLRLGKIVGFFPRH) are vacuolar. The chain crosses the membrane as a helical span at residues 339–359 (ILIGCIGGVGYFLIITGIEVT). At 360 to 375 (TRVAKFEYSWPFFSGL) the chain is on the cytoplasmic side. The helical transmembrane segment at 376–396 (FTDYDTLAKWLLPVLLTVVLI) threads the bilayer. At 397-405 (GTQRYFKNS) the chain is on the vacuolar side. The chain crosses the membrane as a helical span at residues 406–426 (LVLPSFYILTLVLFHFIVAII). Over 427–473 (PTLSLDALRQAGWIFPIANSDSKWYDHYRLFNVHKVHWSLVLQQIPT) the chain is Cytoplasmic. Residues 474–494 (MMALTFFGILHVPINVPALAM) traverse the membrane as a helical segment. The Vacuolar segment spans residues 495–515 (SLQMDKYDVDRELIAHGYSNF). Residues 516-536 (FSGLLGSVQNYLVYTNSVLFI) form a helical membrane-spanning segment. Over 537–546 (RAGADSPFAG) the chain is Cytoplasmic. The chain crosses the membrane as a helical span at residues 547-567 (FLLIALTICIMIIGPVIISFI). Position 568 (Pro568) is a topological domain, vacuolar. Residues 569–589 (ICIVGSLIFLLGYELLVEALV) form a helical membrane-spanning segment. The Cytoplasmic portion of the chain corresponds to 590–604 (DTWNKLNRFEYLTVV). The helical transmembrane segment at 605-625 (IIVFTMGIFDFVLGIIVGILI) threads the bilayer. Residues 626 to 664 (ACFSFLVDSTKLQTINGEYNGNVARSTVYRDYVQTKFLD) are Vacuolar-facing. The 122-residue stretch at 660 to 781 (TKFLDGIGEQ…ADLNSALEWC (122 aa)) folds into the STAS domain. A helical transmembrane segment spans residues 665–685 (GIGEQIYVLKLQNLLFFGTII). Residues 686 to 1036 (SIEEKIERLL…ELLGYTLVSA (351 aa)) are Cytoplasmic-facing. Ser842 is modified (phosphoserine). The residue at position 847 (Thr847) is a Phosphothreonine.

It is found in the vacuole membrane. In terms of biological role, amino acid transporter involved in vacuolar uptake of basic amino acids for storage during nitrogen replete condititions. May function as an amino acid/proton antiporter. This is Vacuolar basic amino acid transporter VSB1 from Saccharomyces cerevisiae (strain ATCC 204508 / S288c) (Baker's yeast).